The primary structure comprises 315 residues: piRNA biogenesis protein EXD1 (315 aa).

One can recognise a 3'-5' exonuclease domain in the interval 141 to 228 (IYIFDIQVMQ…ECLTNYLGLQ (88 aa)).

The protein belongs to the EXD1 family. Homodimer. Component of the PET complex, at least composed of EXD1, SIWI, TDRD12 and piRNAs.

It localises to the cytoplasm. RNA-binding component of the PET complex, a multiprotein complex required for the processing of piRNAs during spermatogenesis. The piRNA metabolic process mediates the repression of transposable elements during meiosis by forming complexes composed of piRNAs and Piwi proteins and governs the methylation and subsequent repression of transposable elements, preventing their mobilization, which is essential for the germline integrity. The PET complex is required during the secondary piRNAs metabolic process for the PIWIL2 slicing-triggered loading of PIWIL4 piRNAs. In the PET complex, EXD1 probably acts as an RNA adapter. EXD1 is an inactive exonuclease. This Bombyx mori (Silk moth) protein is piRNA biogenesis protein EXD1.